The primary structure comprises 315 residues: Methionyl-tRNA formyltransferase (315 aa).

Ser113 to Pro116 provides a ligand contact to (6S)-5,6,7,8-tetrahydrofolate.

The protein belongs to the Fmt family.

The enzyme catalyses L-methionyl-tRNA(fMet) + (6R)-10-formyltetrahydrofolate = N-formyl-L-methionyl-tRNA(fMet) + (6S)-5,6,7,8-tetrahydrofolate + H(+). Attaches a formyl group to the free amino group of methionyl-tRNA(fMet). The formyl group appears to play a dual role in the initiator identity of N-formylmethionyl-tRNA by promoting its recognition by IF2 and preventing the misappropriation of this tRNA by the elongation apparatus. The sequence is that of Methionyl-tRNA formyltransferase from Shigella boydii serotype 4 (strain Sb227).